We begin with the raw amino-acid sequence, 472 residues long: ATP-dependent rRNA helicase rrp3 (472 aa).

The disordered stretch occupies residues 1 to 52; that stretch reads MPAIKKRKIAREAPQQEDHSDSEAHSSASEDAAPNTTEQEQEPSEAPKQAPK. Basic and acidic residues predominate over residues 10–24; sequence AREAPQQEDHSDSEA. Positions 52–80 match the Q motif motif; the sequence is KSFKELGLIEQLCEACDSMGYKAPTAIQA. Residues 83–254 enclose the Helicase ATP-binding domain; it reads IPLALQGRDL…RASLQNPLRV (172 aa). ATP is bound at residue 96 to 103; sequence AETGSGKT. A DEAD box motif is present at residues 202–205; that stretch reads DEAD. The 145-residue stretch at 282-426 folds into the Helicase C-terminal domain; sequence YLVYLLNEFV…EYPAEKDEVM (145 aa). The tract at residues 443-472 is disordered; the sequence is MKNYDEKKGSRGKKFAKGKRSREDMDQEEG. Residues 452 to 462 show a composition bias toward basic residues; that stretch reads SRGKKFAKGKR.

Belongs to the DEAD box helicase family. DDX47/RRP3 subfamily. Interacts with the SSU processome.

The protein resides in the nucleus. It catalyses the reaction ATP + H2O = ADP + phosphate + H(+). ATP-dependent rRNA helicase required for pre-ribosomal RNA processing. Involved in the maturation of the 35S-pre-rRNA and to its cleavage to mature 18S rRNA. The sequence is that of ATP-dependent rRNA helicase rrp3 from Aspergillus oryzae (strain ATCC 42149 / RIB 40) (Yellow koji mold).